The primary structure comprises 386 residues: HORMA domain-containing protein 1 (386 aa).

An HORMA domain is found at 24–224 (TQSLILVKRL…TPFHVLKVKV (201 aa)). Disordered regions lie at residues 237-274 (SIFK…KRDD) and 289-386 (EDGN…TPLN). Residues 289-313 (EDGNLQSDDSQNSALADSQEKTSQA) are compositionally biased toward polar residues. Positions 329–343 (QKPDLELKNQKESAR) are enriched in basic and acidic residues.

It is found in the nucleus. It localises to the chromosome. Plays a key role in meiotic progression by ensuring that sufficient numbers of processed DNA double-strand breaks (DSBs) are available for successful homology search, promoting synaptonemal-complex formation independently and playing key role in the male mid-pachytene checkpoint and the female meiotic prophase checkpoint. This chain is HORMA domain-containing protein 1 (hormad1), found in Xenopus laevis (African clawed frog).